The following is an 837-amino-acid chain: Ubiquitin carboxyl-terminal hydrolase A (837 aa).

Residues 166–277 (PSAFAESIIQ…QHLTHWGLNP (112 aa)) form a UBP-type; degenerate zinc finger. Positions 319 to 835 (TGIENLGNSC…LGYIYFYKRQ (517 aa)) constitute a USP domain. Cys328 acts as the Nucleophile in catalysis. The 42-residue stretch at 628–669 (SFNQEVLDTLLSMDFPLVRCKKALLATGGKDAELAMNWIFEH) folds into the UBA 1 domain. Residues 676–695 (DIEQTPVNNNNNNNNSSNSN) form a disordered region. Low complexity predominate over residues 683-695 (NNNNNNNNSSNSN). In terms of domain architecture, UBA 2 spans 700 to 740 (VFNSQDVDNIIGMGFTDSQAKLALKNTKGNLERAADWLFSH). His797 (proton acceptor) is an active-site residue.

This sequence belongs to the peptidase C19 family.

It catalyses the reaction Thiol-dependent hydrolysis of ester, thioester, amide, peptide and isopeptide bonds formed by the C-terminal Gly of ubiquitin (a 76-residue protein attached to proteins as an intracellular targeting signal).. Its function is as follows. Required for development but not growth. The sequence is that of Ubiquitin carboxyl-terminal hydrolase A (ubpA) from Dictyostelium discoideum (Social amoeba).